The primary structure comprises 445 residues: Trigger factor (445 aa).

A PPIase FKBP-type domain is found at 162–247 (GDQVTIDAIG…IKAVHTAEPT (86 aa)).

It belongs to the FKBP-type PPIase family. Tig subfamily.

It is found in the cytoplasm. The catalysed reaction is [protein]-peptidylproline (omega=180) = [protein]-peptidylproline (omega=0). Its function is as follows. Involved in protein export. Acts as a chaperone by maintaining the newly synthesized protein in an open conformation. Functions as a peptidyl-prolyl cis-trans isomerase. This Rickettsia massiliae (strain Mtu5) protein is Trigger factor.